Reading from the N-terminus, the 213-residue chain is MSGYKNNNLVKLCIMGDGGVGKTAVTIQFISNHFVHYYDPTIEDSYRKQCVIDDQVYMLDILDTAGQDELTAMRDQWIRSCEGFVLVYSVTSRSSFDQIAFFKEQINRVLDSDDVPIMMIGNKSDLDDERQVTYQEGKDLARCFGMSFMEVSAKTRSNIEEVFNETVRCVKRKYDLHNKDKSKDGKDIKKKNSIIKKLNQKVNNTKNSICKMM.

16–23 (GDGGVGKT) is a GTP binding site. The Effector region signature appears at 38–46 (YDPTIEDSY). GTP contacts are provided by residues 63–67 (DTAGQ) and 122–125 (NKSD). The residue at position 210 (Cys-210) is a Cysteine methyl ester. Cys-210 carries the S-geranylgeranyl cysteine lipid modification. A propeptide spans 211–213 (KMM) (removed in mature form).

This sequence belongs to the small GTPase superfamily. Ras family.

The protein localises to the cell membrane. The catalysed reaction is GTP + H2O = GDP + phosphate + H(+). Functionally, ras proteins bind GDP/GTP and possess intrinsic GTPase activity. The chain is Ras-like protein rasX (rasX) from Dictyostelium discoideum (Social amoeba).